The following is a 425-amino-acid chain: UPF0229 protein SG1344 (425 aa).

The tract at residues glycine 49–glutamate 109 is disordered. Residues glutamate 50 to isoleucine 59 are compositionally biased toward polar residues. Residues proline 77–arginine 90 are compositionally biased toward basic and acidic residues.

This sequence belongs to the UPF0229 family.

The sequence is that of UPF0229 protein SG1344 from Sodalis glossinidius (strain morsitans).